The primary structure comprises 202 residues: Protein N-terminal glutamine amidohydrolase (202 aa).

Residues Cys-27, His-80, and Asp-96 contribute to the active site.

It belongs to the NTAQ1 family. Monomer.

The protein localises to the cytoplasm. Its subcellular location is the cytosol. The protein resides in the nucleus. It catalyses the reaction N-terminal L-glutaminyl-[protein] + H2O = N-terminal L-glutamyl-[protein] + NH4(+). Functionally, mediates the side-chain deamidation of N-terminal glutamine residues to glutamate, an important step in N-end rule pathway of protein degradation. Conversion of the resulting N-terminal glutamine to glutamate renders the protein susceptible to arginylation, polyubiquitination and degradation as specified by the N-end rule. Does not act on substrates with internal or C-terminal glutamine and does not act on non-glutamine residues in any position. Does not deaminate acetylated N-terminal glutamine. With the exception of proline, all tested second-position residues on substrate peptides do not greatly influence the activity. In contrast, a proline at position 2, virtually abolishes deamidation of N-terminal glutamine. This chain is Protein N-terminal glutamine amidohydrolase (ntaq1), found in Danio rerio (Zebrafish).